The chain runs to 628 residues: tRNA uridine 5-carboxymethylaminomethyl modification enzyme MnmG (628 aa).

Position 14 to 19 (14 to 19) interacts with FAD; it reads GAGHAG. 273–287 lines the NAD(+) pocket; that stretch reads GPRYCPSIEDKVVRF.

Belongs to the MnmG family. Homodimer. Heterotetramer of two MnmE and two MnmG subunits. It depends on FAD as a cofactor.

The protein resides in the cytoplasm. NAD-binding protein involved in the addition of a carboxymethylaminomethyl (cmnm) group at the wobble position (U34) of certain tRNAs, forming tRNA-cmnm(5)s(2)U34. This is tRNA uridine 5-carboxymethylaminomethyl modification enzyme MnmG from Bacillus velezensis (strain DSM 23117 / BGSC 10A6 / LMG 26770 / FZB42) (Bacillus amyloliquefaciens subsp. plantarum).